The primary structure comprises 84 residues: Acyl-CoA-binding protein (84 aa).

The 84-residue stretch at 1–84 (MTTFEEAAQK…LYEQLATKYA (84 aa)) folds into the ACB domain. An acyl-CoA-binding positions include Lys12, 27–31 (YGLYK), Lys53, and Tyr72.

It belongs to the ACBP family. Interacts with dhkA.

Functionally, binds to acyl-CoA. Processed into the SDF-2 (spore differentiation factor 2) a peptide which triggers sporulation. SDF-2 appears to stimulate prestalk cells to release additional SDF-2 by acting through a signal transduction pathway that also involves dhkA, regA and PKA. Induces encapsulation of prespore cells in a dhkA-dependent manner. GABA induces the release of acbA from prespore cells and induces the exposure of tagC on the surface of prestalk cells where it can convert acbA to SDF-2. Glutamate acts as a competitive inhibitor and is also able to inhibit induction of sporulation by SDF-2. The polypeptide is Acyl-CoA-binding protein (acbA) (Dictyostelium discoideum (Social amoeba)).